The sequence spans 1755 residues: Transposon Ty1-JR1 Gag-Pol polyprotein (1755 aa).

Residues 1–16 (MESQQLSQHSHISHGS) show a composition bias toward low complexity. 3 disordered regions span residues 1–93 (MESQ…MMTQ), 126–173 (PQSQ…RPPP), and 352–421 (GSRN…SKST). Polar residues-rich tracts occupy residues 48 to 60 (TKAN…TPAS) and 127 to 152 (QSQF…GNTF). The segment covering 153–165 (TDSSSADSDMTST) has biased composition (low complexity). Residues 299–401 (NNGIHINNKV…NSKSKTARAH (103 aa)) are RNA-binding. Low complexity predominate over residues 402-418 (NVSTSNNSPSTDNDSIS). S416 bears the Phosphoserine mark. The active-site For protease activity; shared with dimeric partner is the D461. The integrase-type zinc finger-like stretch occupies residues 583–640 (NVHTSESTRKYPYPFIHRMLAHANAQTIRYSLKNNTITYFNESDVDWSSAIDYQCPDC). Residues 660–835 (NSYEPFQYLH…AGLDISTLLP (176 aa)) enclose the Integrase catalytic domain. D671 and D736 together coordinate Mg(2+). Disordered regions lie at residues 956–1087 (SKAV…ETEK), 1092–1111 (RSPS…NIVP), and 1130–1186 (DLPL…EDNE). The span at 960–969 (SPTDSTPPST) shows a compositional bias: low complexity. Polar residues predominate over residues 1005–1015 (STPQISNIEST). Over residues 1038–1053 (ESSHASKSKDFRHSDS) the composition is skewed to basic and acidic residues. 2 stretches are compositionally biased toward polar residues: residues 1054–1082 (YSEN…QISD) and 1101–1111 (PENNSSHNIVP). Residues 1178–1212 (KKRSLEDNETEIKVSRDTWNTKNMRSLEPPRSKKR) carry the Bipartite nuclear localization signal motif. The Reverse transcriptase Ty1/copia-type domain occupies 1338-1476 (NNYYITQLDI…DILGLEIKYQ (139 aa)). D1346, D1427, D1428, D1610, E1652, and D1685 together coordinate Mg(2+). The RNase H Ty1/copia-type domain occupies 1610 to 1752 (DASYGNQPYY…IKTFKLLTNK (143 aa)).

As to quaternary structure, the capsid protein forms a homotrimer, from which the VLPs are assembled. The protease is a homodimer, whose active site consists of two apposed aspartic acid residues. Post-translationally, initially, virus-like particles (VLPs) are composed of the structural unprocessed proteins Gag and Gag-Pol, and also contain the host initiator methionine tRNA (tRNA(i)-Met) which serves as a primer for minus-strand DNA synthesis, and a dimer of genomic Ty RNA. Processing of the polyproteins occurs within the particle and proceeds by an ordered pathway, called maturation. First, the protease (PR) is released by autocatalytic cleavage of the Gag-Pol polyprotein yielding capsid protein p45 and a Pol-p154 precursor protein. This cleavage is a prerequisite for subsequent processing of Pol-p154 at the remaining sites to release the mature structural and catalytic proteins. Maturation takes place prior to the RT reaction and is required to produce transposition-competent VLPs.

Its subcellular location is the cytoplasm. It is found in the nucleus. It carries out the reaction DNA(n) + a 2'-deoxyribonucleoside 5'-triphosphate = DNA(n+1) + diphosphate. The enzyme catalyses Endonucleolytic cleavage to 5'-phosphomonoester.. Its function is as follows. Capsid protein (CA) is the structural component of the virus-like particle (VLP), forming the shell that encapsulates the retrotransposons dimeric RNA genome. The particles are assembled from trimer-clustered units and there are holes in the capsid shells that allow for the diffusion of macromolecules. CA also has nucleocapsid-like chaperone activity, promoting primer tRNA(i)-Met annealing to the multipartite primer-binding site (PBS), dimerization of Ty1 RNA and initiation of reverse transcription. The aspartyl protease (PR) mediates the proteolytic cleavages of the Gag and Gag-Pol polyproteins after assembly of the VLP. In terms of biological role, reverse transcriptase/ribonuclease H (RT) is a multifunctional enzyme that catalyzes the conversion of the retro-elements RNA genome into dsDNA within the VLP. The enzyme displays a DNA polymerase activity that can copy either DNA or RNA templates, and a ribonuclease H (RNase H) activity that cleaves the RNA strand of RNA-DNA heteroduplexes during plus-strand synthesis and hydrolyzes RNA primers. The conversion leads to a linear dsDNA copy of the retrotransposon that includes long terminal repeats (LTRs) at both ends. Functionally, integrase (IN) targets the VLP to the nucleus, where a subparticle preintegration complex (PIC) containing at least integrase and the newly synthesized dsDNA copy of the retrotransposon must transit the nuclear membrane. Once in the nucleus, integrase performs the integration of the dsDNA into the host genome. The sequence is that of Transposon Ty1-JR1 Gag-Pol polyprotein (TY1B-JR1) from Saccharomyces cerevisiae (strain ATCC 204508 / S288c) (Baker's yeast).